Reading from the N-terminus, the 822-residue chain is Fibroblast growth factor receptor 1 (822 aa).

A signal peptide spans 1–21; that stretch reads MWGWKCLLFWAVLVTATLCTA. Topologically, residues 22 to 376 are extracellular; sequence RPAPTLPEQA…AVMTSPLYLE (355 aa). In terms of domain architecture, Ig-like C2-type 1 spans 25–119; it reads PTLPEQAQPW…DTTYFSVNVS (95 aa). A disulfide bond links Cys55 and Cys101. Asn77 and Asn117 each carry an N-linked (GlcNAc...) asparagine glycan. Residues 120–162 form a disordered region; sequence DALPSSEDDDDDDDSSSEEKETDNTKPNRRPVAPYWTSPEKME. Residues 125 to 135 are compositionally biased toward acidic residues; that stretch reads SEDDDDDDDSS. The segment covering 136–145 has biased composition (basic and acidic residues); it reads SEEKETDNTK. 2 consecutive Ig-like C2-type domains span residues 158 to 246 and 255 to 357; these read PEKM…YQLD and PILQ…AWLT. The segment at 160–177 is heparin-binding; it reads KMEKKLHAVPAAKTVKFK. Cys178 and Cys230 form a disulfide bridge. Asn227, Asn240, Asn264, Asn296, Asn317, and Asn330 each carry an N-linked (GlcNAc...) asparagine glycan. An intrachain disulfide couples Cys277 to Cys341. The chain crosses the membrane as a helical span at residues 377–397; it reads IIIYCTGAFLISCMLGSVIIY. Residues 398-822 lie on the Cytoplasmic side of the membrane; that stretch reads KMKSGTKKSD…QLANSGLKRR (425 aa). The residue at position 463 (Tyr463) is a Phosphotyrosine; by autocatalysis. The Protein kinase domain occupies 478–767; that stretch reads LVLGKPLGEG…VALTSNQEYL (290 aa). Residues 484 to 490, Lys514, 562 to 564, and Asn568 contribute to the ATP site; these read LGEGCFG and EYA. A phosphotyrosine; by autocatalysis mark is found at Tyr583 and Tyr585. The active-site Proton acceptor is the Asp623. 2 residues coordinate ATP: Arg627 and Asp641. Phosphotyrosine; by autocatalysis occurs at positions 653, 654, 730, and 766. The span at 782-792 shows a compositional bias: polar residues; sequence DTRSSTCSSGE. The interval 782–822 is disordered; it reads DTRSSTCSSGEDSVFSHEPLPEEPCLPRHPTQLANSGLKRR.

Belongs to the protein kinase superfamily. Tyr protein kinase family. Fibroblast growth factor receptor subfamily. In terms of assembly, monomer. Homodimer after ligand binding. Interacts predominantly with FGF1 and FGF2, but can also interact with FGF3, FGF4, FGF5, FGF6, FGF8, FGF10, FGF19, FGF21, FGF22 and FGF23 (in vitro). Ligand specificity is determined by tissue-specific expression of isoforms, and differences in the third Ig-like domain are crucial for ligand specificity. Affinity for fibroblast growth factors (FGFs) is increased by heparan sulfate glycosaminoglycans that function as coreceptors. Likewise, KLB increases the affinity for FGF19, FGF21 and FGF23. Interacts (phosphorylated on Tyr-766) with PLCG1 (via SH2 domains). Interacts with FRS2. Interacts with RPS6KA1. Interacts (via C-terminus) with NEDD4 (via WW3 domain). Interacts with KL. Interacts with SHB (via SH2 domain). Interacts with GRB10. Interacts with ANOS1; this interaction does not interfere with FGF2-binding to FGFR1, but prevents binding of heparin-bound FGF2. Interacts with SOX2 and SOX3. Interacts with FLRT1, FLRT2 and FLRT3. Found in a ternary complex with FGF1 and ITGAV:ITGB3. In terms of processing, autophosphorylated. Binding of FGF family members together with heparan sulfate proteoglycan or heparin promotes receptor dimerization and autophosphorylation on tyrosine residues. Autophosphorylation occurs in trans between the two FGFR molecules present in the dimer and proceeds in a highly ordered manner. Initial autophosphorylation at Tyr-653 increases the kinase activity by a factor of 50 to 100. After this, Tyr-583 becomes phosphorylated, followed by phosphorylation of Tyr-463, Tyr-766, Tyr-583 and Tyr-585. In a third stage, Tyr-654 is autophosphorylated, resulting in a further tenfold increase of kinase activity. Phosphotyrosine residues provide docking sites for interacting proteins and so are crucial for FGFR1 function and its regulation. Ubiquitinated. FGFR1 is rapidly ubiquitinated by NEDD4 after autophosphorylation, leading to internalization and lysosomal degradation. CBL is recruited to activated FGFR1 via FRS2 and GRB2, and mediates ubiquitination and subsequent degradation of FGFR1. Post-translationally, N-glycosylated in the endoplasmic reticulum. The N-glycan chains undergo further maturation to an Endo H-resistant form in the Golgi apparatus. In terms of tissue distribution, widely expressed.

Its subcellular location is the cell membrane. It is found in the nucleus. It localises to the cytoplasm. The protein localises to the cytosol. The protein resides in the cytoplasmic vesicle. It catalyses the reaction L-tyrosyl-[protein] + ATP = O-phospho-L-tyrosyl-[protein] + ADP + H(+). Its activity is regulated as follows. Present in an inactive conformation in the absence of bound ligand. Ligand binding leads to dimerization and activation by sequential autophosphorylation on tyrosine residues. Functionally, tyrosine-protein kinase that acts as a cell-surface receptor for fibroblast growth factors and plays an essential role in the regulation of embryonic development, cell proliferation, differentiation and migration. Required for normal mesoderm patterning and correct axial organization during embryonic development, normal skeletogenesis and normal development of the gonadotropin-releasing hormone (GnRH) neuronal system. Phosphorylates PLCG1, FRS2, GAB1 and SHB. Ligand binding leads to the activation of several signaling cascades. Activation of PLCG1 leads to the production of the cellular signaling molecules diacylglycerol and inositol 1,4,5-trisphosphate. Phosphorylation of FRS2 triggers recruitment of GRB2, GAB1, PIK3R1 and SOS1, and mediates activation of RAS, MAPK1/ERK2, MAPK3/ERK1 and the MAP kinase signaling pathway, as well as of the AKT1 signaling pathway. Promotes phosphorylation of SHC1, STAT1 and PTPN11/SHP2. In the nucleus, enhances RPS6KA1 and CREB1 activity and contributes to the regulation of transcription. FGFR1 signaling is down-regulated by IL17RD/SEF, and by FGFR1 ubiquitination, internalization and degradation. The polypeptide is Fibroblast growth factor receptor 1 (Fgfr1) (Mus musculus (Mouse)).